Consider the following 607-residue polypeptide: Thymidine kinase (607 aa).

Disordered stretches follow at residues 1–160 and 180–215; these read MAGF…ADST and DDKSDCESEDESNFRRPSSHSALKQKNGGKGKPSGL. Residues 17–32 show a composition bias toward basic and acidic residues; that stretch reads KCQEDESPENERHENF. 3 stretches are compositionally biased toward polar residues: residues 88 to 106, 148 to 160, and 194 to 203; these read AAVTSNTGNSPGSRHTSCP, RKTSCTEGGADST, and RRPSSHSALK. Residue 291 to 298 participates in ATP binding; it reads GAPGVGKT. The active-site Proton acceptor is the Glu317. A substrate-binding site is contributed by Gln355. Arg445 serves as a coordination point for ATP. Residue Arg451 participates in substrate binding.

It belongs to the herpesviridae thymidine kinase family. Homodimer.

It is found in the virion tegument. It localises to the host nucleus. It carries out the reaction thymidine + ATP = dTMP + ADP + H(+). In terms of biological role, catalyzes the transfer of the gamma-phospho group of ATP to thymidine to generate dTMP in the salvage pathway of pyrimidine synthesis. The dTMP serves as a substrate for DNA polymerase during viral DNA replication. Allows the virus to be reactivated and to grow in non-proliferative cells lacking a high concentration of phosphorylated nucleic acid precursors. The sequence is that of Thymidine kinase from Epstein-Barr virus (strain GD1) (HHV-4).